The sequence spans 488 residues: Elongation factor Tu, chloroplastic (488 aa).

Residues 1–20 (MALSSTAATTSSKLKLSNPP) are disordered. The N-terminal 79 residues, 1 to 79 (MALSSTAATT…RPSSSPFTVR (79 aa)), are a transit peptide targeting the chloroplast. The tr-type G domain occupies 89–293 (KPHLNIGTIG…EVDKYIPIPQ (205 aa)). Positions 98-105 (GHVDHGKT) are G1. Position 98-105 (98-105 (GHVDHGKT)) interacts with GTP. The interval 139 to 143 (GITIN) is G2. Residues 160-163 (DCPG) form a G3 region. Residues 160–164 (DCPGH) and 215–218 (NKQD) each bind GTP. Positions 215–218 (NKQD) are G4. A G5 region spans residues 253–255 (SAL).

This sequence belongs to the TRAFAC class translation factor GTPase superfamily. Classic translation factor GTPase family. EF-Tu/EF-1A subfamily. Higher expression in leaves than in roots.

The protein resides in the plastid. It is found in the chloroplast. Its function is as follows. This protein promotes the GTP-dependent binding of aminoacyl-tRNA to the A-site of ribosomes during protein biosynthesis. This Pisum sativum (Garden pea) protein is Elongation factor Tu, chloroplastic (tufA).